A 227-amino-acid chain; its full sequence is MMWKTVLITIFAAGVLADDFSQITAVVTSQCTKNNAEDKVPEVEAALRTFGNCLKGLVDLNVLKTEIEEAKPNGALDEVFKKYCDKSAQLKGCISSVLQGVRPCVGNEYANHINDAQNSTNQLIDFVCYKDGDRIALFIAEGGPECFQQKTENLKTCFLNLKQSFPTVESANNLSLVEKCAKVDEMTSCIVKSLEECSTPTPANMAESLIKFMRKDSPCHTALPKTD.

The N-terminal stretch at 1-17 (MMWKTVLITIFAAGVLA) is a signal peptide. N-linked (GlcNAc...) asparagine glycosylation is found at N118 and N173.

The protein belongs to the UPF0408 family. Expressed in the subesophageal body, fat bodies, hemocytes, midgut and Malpighian tubules. Not expressed in silk glands.

The protein resides in the secreted. This Bombyx mori (Silk moth) protein is 27 kDa glycoprotein.